We begin with the raw amino-acid sequence, 3072 residues long: Platelet binding protein GspB (3072 aa).

Positions 1–85 are cleaved as a signal peptide; that stretch reads MFFKRQKGQY…AVLGGAVVTS (85 aa). Disordered stretches follow at residues 117 to 147, 182 to 254, 876 to 909, 936 to 969, 1024 to 2085, 2106 to 2139, 2173 to 2223, 2250 to 2595, 2625 to 2965, and 3014 to 3045; these read EAAT…SASS, SESL…APNV, SAST…SVSA, SASV…SVSA, VSAS…SVSA, TSAS…NASV, and SQSL…GESE. The segment covering 118–127 has biased composition (polar residues); it reads AATTLSSTEA. The interval 123–236 is ser-rich region 1 (SSR1); it reads SSTEANPVES…SSQQSTEASS (114 aa). 2 stretches are compositionally biased toward low complexity: residues 131–147 and 182–238; these read ESLS…SASS and SESL…SSQT. Residues 237 to 603 form a basic region (BR) region; the sequence is QTGRRRTRRA…GSKFIDTRAG (367 aa). A ser-rich region 2 (SSR2) region spans residues 604–3028; it reads SISKSQSTSN…ESQSSSASQS (2425 aa). Residues 3014 to 3028 show a composition bias toward low complexity; the sequence is SQSLSESQSSSASQS. The LPXTG sorting signal signature appears at 3038–3042; the sequence is LPRTG. Position 3041 is a pentaglycyl murein peptidoglycan amidated threonine (threonine 3041). A propeptide spans 3042–3072 (removed by sortase); that stretch reads GESENKASILALGLGALGLAFKKRKKNESED.

This sequence belongs to the serine-rich repeat protein (SRRP) family. As to quaternary structure, both SSR domains in the unglycosylated protein bind to Asp2 and Asp3; glycosylated protein binds less well. Interacts with the human cell surface glycoprotein GP1BA. In terms of processing, proteolytically cleaved by a metalloprotease. Both SSR1 and SSR2 domains are glycosylated. A truncated derivative (residues 1-2062) contains 105 nmol per nmol of protein, suggesting at least 10% of the apparent molecular weight is due to carbohydrates. Glucose and N-acetylglucosamine are present in a ratio of 30:73 residues per truncated polypeptide, as well as minor amounts of galactose and N-acetylgalactosamine. Glycosylation occurs intracellularly in the Ser-rich regions SSR1 and SSR2. Glycosylation of SSR2 domain may be required to prevent aggregation of GspB. It is probable that most of the Ser residues in SSR1 and SSR2 are O-GlcNAcylated. Sequential glycosylation by sugar transferases are able to generate complex sugar polymorphisms.

It localises to the secreted. The protein localises to the cell wall. Functionally, plays a role in virulence and host-pathogen interactions. Mediates binding to human platelets via interaction with the human cell surface glycoprotein GP1BA. Plays a positive role in biofilm formation, possibly by self-association via the basic region (BR). The protein is Platelet binding protein GspB (gspB) of Streptococcus gordonii.